A 235-amino-acid chain; its full sequence is Large ribosomal subunit protein uL1 (235 aa).

This sequence belongs to the universal ribosomal protein uL1 family. As to quaternary structure, part of the 50S ribosomal subunit.

In terms of biological role, binds directly to 23S rRNA. The L1 stalk is quite mobile in the ribosome, and is involved in E site tRNA release. Protein L1 is also a translational repressor protein, it controls the translation of the L11 operon by binding to its mRNA. The sequence is that of Large ribosomal subunit protein uL1 from Mycolicibacterium smegmatis (strain ATCC 700084 / mc(2)155) (Mycobacterium smegmatis).